We begin with the raw amino-acid sequence, 3075 residues long: Laminin subunit alpha-1 (3075 aa).

Residues 1 to 17 form the signal peptide; the sequence is MRGGVLLVLLLCVAAQC. Residues 18–269 form the Laminin N-terminal domain; the sequence is RQRGLFPAIL…SIKDISVGGM (252 aa). Disulfide bonds link Cys-270–Cys-279, Cys-272–Cys-290, Cys-292–Cys-301, Cys-304–Cys-324, Cys-327–Cys-336, Cys-329–Cys-361, Cys-364–Cys-373, Cys-376–Cys-394, Cys-397–Cys-409, Cys-399–Cys-427, Cys-429–Cys-438, Cys-441–Cys-451, Cys-454–Cys-467, Cys-456–Cys-471, Cys-473–Cys-482, and Cys-485–Cys-500. Laminin EGF-like domains lie at 270-326, 327-396, 397-453, and 454-502; these read CICY…TCEA, CNCH…PCRP, CNCD…TCVS, and CGCN…GCSE. The 10-residue stretch at 503–512 folds into the Laminin EGF-like 5; first part domain; that stretch reads CFCFGVSDVC. The Laminin IV type A 1 domain maps to 516–708; sequence SWPVGQVNSM…DLVVAADVEH (193 aa). Asn-665 carries an N-linked (GlcNAc...) asparagine glycan. Residues 709 to 741 enclose the Laminin EGF-like 5; second part domain; the sequence is CECPQGYTGTSCESCLSGYYRVDGILFGGICQP. Disulfide bonds link Cys-742–Cys-751, Cys-744–Cys-757, Cys-760–Cys-769, Cys-772–Cys-788, Cys-791–Cys-806, Cys-793–Cys-816, Cys-819–Cys-828, Cys-831–Cys-846, Cys-849–Cys-863, Cys-851–Cys-870, Cys-873–Cys-882, Cys-885–Cys-899, Cys-902–Cys-914, Cys-904–Cys-921, Cys-923–Cys-932, Cys-935–Cys-948, Cys-951–Cys-963, Cys-953–Cys-969, Cys-971–Cys-980, Cys-983–Cys-995, Cys-998–Cys-1007, Cys-1000–Cys-1014, Cys-1016–Cys-1025, Cys-1028–Cys-1041, Cys-1044–Cys-1056, Cys-1046–Cys-1063, Cys-1065–Cys-1074, Cys-1077–Cys-1087, Cys-1090–Cys-1102, Cys-1092–Cys-1118, Cys-1120–Cys-1129, and Cys-1132–Cys-1147. 8 Laminin EGF-like domains span residues 742–790, 791–848, 849–901, 902–950, 951–997, 998–1043, 1044–1089, and 1090–1149; these read CECH…DCQP, CACP…SCVP, CDCS…NCRA, CECH…GCRP, CNCS…SCTP, CDCP…GCQA, CNCS…DCVP, and CDCD…GCSP. Residues 1150–1159 enclose the Laminin EGF-like 14; first part domain; it reads CFCSGLSHLC. Positions 1170–1361 constitute a Laminin IV type A 2 domain; it reads VTLGSDQPLL…EEEVASLLEN (192 aa). A Laminin EGF-like 14; second part domain is found at 1362–1402; sequence CVCPPGTVGFSCQDCAPGYHRGKLPAGSDRGPRPLVAPCVP. Cystine bridges form between Cys-1403-Cys-1412, Cys-1405-Cys-1419, Cys-1422-Cys-1431, Cys-1434-Cys-1449, Cys-1452-Cys-1466, Cys-1454-Cys-1476, Cys-1479-Cys-1488, Cys-1491-Cys-1506, Cys-1509-Cys-1521, Cys-1511-Cys-1528, Cys-1530-Cys-1539, and Cys-1542-Cys-1553. 3 Laminin EGF-like domains span residues 1403 to 1451, 1452 to 1508, and 1509 to 1555; these read CSCN…DCAL, CACP…SCQK, and CDCN…DCVS. The interval 1556 to 2116 is domain II and I; sequence CDDECVGVLL…SQARKQAASI (561 aa). Residues Asn-1579, Asn-1689, Asn-1717, Asn-2047, and Asn-2243 are each glycosylated (N-linked (GlcNAc...) asparagine). The stretch at 1706–1783 forms a coiled coil; that stretch reads MQIRDFTQLH…KMQESNHLLL (78 aa). Laminin G-like domains are found at residues 2117-2297, 2305-2481, 2486-2673, 2713-2885, and 2890-3070; these read KVAV…CRGC, DPSF…RKGC, IRSV…LDTC, AHQF…VNRC, and QEGT…LHSC. Cystine bridges form between Cys-2271/Cys-2297 and Cys-2457/Cys-2481. A Cell attachment site motif is present at residues 2534-2536; sequence RGD. 3 disulfide bridges follow: Cys-2646-Cys-2673, Cys-2860-Cys-2885, and Cys-3039-Cys-3070.

In terms of assembly, laminin is a complex glycoprotein, consisting of three different polypeptide chains (alpha, beta, gamma), which are bound to each other by disulfide bonds into a cross-shaped molecule comprising one long and three short arms with globules at each end. Alpha-1 is a subunit of laminin-1 (laminin-111 or EHS laminin) and laminin-3 (laminin-121 or S-laminin). In terms of processing, tyrosine phosphorylated by PKDCC/VLK.

It localises to the secreted. The protein localises to the extracellular space. It is found in the extracellular matrix. The protein resides in the basement membrane. In terms of biological role, binding to cells via a high affinity receptor, laminin is thought to mediate the attachment, migration and organization of cells into tissues during embryonic development by interacting with other extracellular matrix components. In Homo sapiens (Human), this protein is Laminin subunit alpha-1 (LAMA1).